Here is a 468-residue protein sequence, read N- to C-terminus: Chromatin assembly factor 1 subunit B (468 aa).

5 WD repeats span residues 11-52 (HDSQ…NGQN), 69-108 (HHEQ…TQQE), 143-182 (TAAA…LVCG), 185-224 (DHGH…AGVV), and 371-413 (IHYS…SRIE).

This sequence belongs to the WD repeat HIR1 family. As to quaternary structure, component of chromatin assembly factor 1 (CAF-1), composed of MSI1/p50, CAC2/p60 and CAC1/p90. Interacts with RTT106.

The protein resides in the nucleus. Functionally, acts as a component of the histone chaperone complex chromatin assembly factor 1 (CAF-1), which assembles histone octamers onto replicating DNA. It performs the first step of the nucleosome assembly process, bringing newly synthesized histones H3 and H4 to replicating DNA; histones H2A/H2B can bind to this chromatin precursor subsequent to DNA replication to complete the histone octamer. Plays a role in the maintenance of heterochromatin. In Saccharomyces cerevisiae (strain ATCC 204508 / S288c) (Baker's yeast), this protein is Chromatin assembly factor 1 subunit B (CAC2).